Here is a 353-residue protein sequence, read N- to C-terminus: Methylthioribose-1-phosphate isomerase (353 aa).

Substrate-binding positions include 51-53 (RGA), R94, and Q203. The active-site Proton donor is D244. 254-255 (NK) contacts substrate.

The protein belongs to the eIF-2B alpha/beta/delta subunits family. MtnA subfamily.

The catalysed reaction is 5-(methylsulfanyl)-alpha-D-ribose 1-phosphate = 5-(methylsulfanyl)-D-ribulose 1-phosphate. It participates in amino-acid biosynthesis; L-methionine biosynthesis via salvage pathway; L-methionine from S-methyl-5-thio-alpha-D-ribose 1-phosphate: step 1/6. Catalyzes the interconversion of methylthioribose-1-phosphate (MTR-1-P) into methylthioribulose-1-phosphate (MTRu-1-P). The sequence is that of Methylthioribose-1-phosphate isomerase from Trichodesmium erythraeum (strain IMS101).